The following is a 103-amino-acid chain: Small ribosomal subunit protein uS10 (103 aa).

This sequence belongs to the universal ribosomal protein uS10 family. As to quaternary structure, part of the 30S ribosomal subunit.

Involved in the binding of tRNA to the ribosomes. The protein is Small ribosomal subunit protein uS10 of Rubrobacter xylanophilus (strain DSM 9941 / JCM 11954 / NBRC 16129 / PRD-1).